A 165-amino-acid chain; its full sequence is Cell division protein SepF (165 aa).

The interval 23–75 (DEYGDYAGDYETQETAPVATRSSKRESRPAPVSDLSERRRPASGPTGVVAELS) is disordered.

This sequence belongs to the SepF family. In terms of assembly, homodimer. Interacts with FtsZ.

It is found in the cytoplasm. Functionally, cell division protein that is part of the divisome complex and is recruited early to the Z-ring. Probably stimulates Z-ring formation, perhaps through the cross-linking of FtsZ protofilaments. Its function overlaps with FtsA. The sequence is that of Cell division protein SepF from Nocardioides sp. (strain ATCC BAA-499 / JS614).